A 470-amino-acid chain; its full sequence is Glucose-1-phosphate adenylyltransferase (470 aa).

Alpha-D-glucose 1-phosphate contacts are provided by residues Gly-165, 182–183 (EK), and Ser-200.

Belongs to the bacterial/plant glucose-1-phosphate adenylyltransferase family. Homotetramer.

The enzyme catalyses alpha-D-glucose 1-phosphate + ATP + H(+) = ADP-alpha-D-glucose + diphosphate. Its pathway is glycan biosynthesis; glycogen biosynthesis. Involved in the biosynthesis of ADP-glucose, a building block required for the elongation reactions to produce glycogen. Catalyzes the reaction between ATP and alpha-D-glucose 1-phosphate (G1P) to produce pyrophosphate and ADP-Glc. The sequence is that of Glucose-1-phosphate adenylyltransferase from Paenarthrobacter aurescens (strain TC1).